The chain runs to 273 residues: NH(3)-dependent NAD(+) synthetase (273 aa).

ATP is bound at residue 45-52 (GISGGQDS). Asp51 serves as a coordination point for Mg(2+). Arg139 serves as a coordination point for deamido-NAD(+). Thr159 is an ATP binding site. Position 164 (Glu164) interacts with Mg(2+). Lys172 and Asp179 together coordinate deamido-NAD(+). ATP is bound by residues Lys188 and Thr210. 259–260 (HK) is a deamido-NAD(+) binding site.

It belongs to the NAD synthetase family. Homodimer.

The enzyme catalyses deamido-NAD(+) + NH4(+) + ATP = AMP + diphosphate + NAD(+) + H(+). It functions in the pathway cofactor biosynthesis; NAD(+) biosynthesis; NAD(+) from deamido-NAD(+) (ammonia route): step 1/1. Its function is as follows. Catalyzes the ATP-dependent amidation of deamido-NAD to form NAD. Uses ammonia as a nitrogen source. This chain is NH(3)-dependent NAD(+) synthetase, found in Bacillus pumilus (strain SAFR-032).